Consider the following 273-residue polypeptide: Elongation factor Ts (273 aa).

Positions 79 to 82 (TDFV) are involved in Mg(2+) ion dislocation from EF-Tu.

This sequence belongs to the EF-Ts family.

The protein localises to the cytoplasm. In terms of biological role, associates with the EF-Tu.GDP complex and induces the exchange of GDP to GTP. It remains bound to the aminoacyl-tRNA.EF-Tu.GTP complex up to the GTP hydrolysis stage on the ribosome. The protein is Elongation factor Ts of Hydrogenobaculum sp. (strain Y04AAS1).